The chain runs to 538 residues: Interleukin-21 receptor (538 aa).

An N-terminal signal peptide occupies residues 1-19 (MPRGWAAPLLLLLLQGGWG). Disulfide bonds link cysteine 20–cysteine 109, cysteine 25–cysteine 35, and cysteine 65–cysteine 81. The Extracellular portion of the chain corresponds to 20-232 (CPDLVCYTDY…FQTQSEELKE (213 aa)). Fibronectin type-III domains follow at residues 21-118 (PDLV…AESI) and 119-228 (KPAP…TQSE). Residues asparagine 73, asparagine 97, asparagine 104, asparagine 125, and asparagine 135 are each glycosylated (N-linked (GlcNAc...) asparagine). C-linked (Man) tryptophan glycosylation occurs at tryptophan 214. Positions 214 to 218 (WSEWS) match the WSXWS motif motif. The chain crosses the membrane as a helical span at residues 233-253 (GWNPHLLLLLLLVIVFIPAFW). At 254–538 (SLKTHPLWRL…PLSSPGPQAS (285 aa)) the chain is on the cytoplasmic side. The Box 1 motif signature appears at 266-274 (KIWAVPSPE). Disordered regions lie at residues 342-367 (ESDGVPKPSFWPTAQNSGGSAYSEER) and 457-487 (EDWAGGLPWGGRSPGGVSESEAGSPLAGLDM).

Belongs to the type I cytokine receptor family. Type 4 subfamily. Heterodimer with the common gamma subunit. Associates with JAK1. C-mannosylated at Trp-214 in the WSXWS motif, the sugar chain makes extensive hydrogen bonds with Asn-73 sugar, and bridges the two fibronectin domains transforming the V-shaped receptor into an A-frame. As to expression, selectively expressed in lymphoid tissues. Most highly expressed in thymus and spleen.

The protein resides in the membrane. This is a receptor for interleukin-21. The protein is Interleukin-21 receptor (IL21R) of Homo sapiens (Human).